A 219-amino-acid polypeptide reads, in one-letter code: Transcriptional regulatory protein QseB (219 aa).

Residues 2–116 (RILLIEDDML…EVAARLEALM (115 aa)) form the Response regulatory domain. Asp-51 carries the post-translational modification 4-aspartylphosphate. The ompR/PhoB-type DNA-binding region spans 124–218 (SNELRHGNVM…VHGIGYTLGE (95 aa)).

Phosphorylated by QseC.

It localises to the cytoplasm. Member of a two-component regulatory system QseB/QseC. Activates the flagella regulon by activating transcription of FlhDC. Currently it is not known whether this effect is direct or not. The chain is Transcriptional regulatory protein QseB (qseB) from Escherichia coli O157:H7.